We begin with the raw amino-acid sequence, 376 residues long: ATP phosphoribosyltransferase regulatory subunit (376 aa).

This sequence belongs to the class-II aminoacyl-tRNA synthetase family. HisZ subfamily. In terms of assembly, heteromultimer composed of HisG and HisZ subunits.

The protein resides in the cytoplasm. Its pathway is amino-acid biosynthesis; L-histidine biosynthesis; L-histidine from 5-phospho-alpha-D-ribose 1-diphosphate: step 1/9. Required for the first step of histidine biosynthesis. May allow the feedback regulation of ATP phosphoribosyltransferase activity by histidine. This is ATP phosphoribosyltransferase regulatory subunit from Brucella canis (strain ATCC 23365 / NCTC 10854 / RM-666).